The chain runs to 48 residues: Delta-ctenitoxin-Pn1b (48 aa).

Intrachain disulfides connect Cys1–Cys15, Cys8–Cys21, Cys12–Cys48, Cys14–Cys31, and Cys23–Cys29.

It belongs to the neurotoxin 03 (Tx2) family. 05 subfamily. As to expression, expressed by the venom gland.

The protein resides in the secreted. Its function is as follows. Insecticidal neurotoxin that reversibly inhibits the N-methyl-D-aspartate (NMDA)-subtype of ionotropic glutamate receptor (GRIN) and inhibits inactivation of insect sodium channels (Nav). Inhibits glutamate uptake in rat brain synaptosomes. In vivo, induces immediate excitatory effects when injected intrathoracically in houseflies and cockroaches. This is Delta-ctenitoxin-Pn1b from Phoneutria nigriventer (Brazilian armed spider).